A 711-amino-acid polypeptide reads, in one-letter code: Constitutive ornithine decarboxylase (711 aa).

Residue Lys-347 is modified to N6-(pyridoxal phosphate)lysine.

This sequence belongs to the Orn/Lys/Arg decarboxylase class-I family. Requires pyridoxal 5'-phosphate as cofactor.

It catalyses the reaction L-ornithine + H(+) = putrescine + CO2. The protein operates within amine and polyamine biosynthesis; putrescine biosynthesis via L-ornithine pathway; putrescine from L-ornithine: step 1/1. The chain is Constitutive ornithine decarboxylase (speC) from Escherichia coli (strain K12).